A 351-amino-acid polypeptide reads, in one-letter code: Nicotinate-nucleotide--dimethylbenzimidazole phosphoribosyltransferase (351 aa).

Glu-317 functions as the Proton acceptor in the catalytic mechanism.

Belongs to the CobT family.

It carries out the reaction 5,6-dimethylbenzimidazole + nicotinate beta-D-ribonucleotide = alpha-ribazole 5'-phosphate + nicotinate + H(+). Its pathway is nucleoside biosynthesis; alpha-ribazole biosynthesis; alpha-ribazole from 5,6-dimethylbenzimidazole: step 1/2. In terms of biological role, catalyzes the synthesis of alpha-ribazole-5'-phosphate from nicotinate mononucleotide (NAMN) and 5,6-dimethylbenzimidazole (DMB). The chain is Nicotinate-nucleotide--dimethylbenzimidazole phosphoribosyltransferase from Pseudomonas aeruginosa (strain LESB58).